A 735-amino-acid polypeptide reads, in one-letter code: Polyribonucleotide nucleotidyltransferase (735 aa).

Residues Asp-515 and Asp-521 each contribute to the Mg(2+) site. The KH domain maps to 581-641 (PKLELFSVDP…KNVDAAKDYI (61 aa)). Positions 649-671 (NSRGFGKKPHGHDRRDKDRQKPT) are disordered. Positions 675–734 (GDEFDGVVKSVVDFGAFIELKDGVDGLLHISKIKTPLNVGDRLKVCVSEQKGNKISLSLV) constitute an S1 motif domain.

Belongs to the polyribonucleotide nucleotidyltransferase family. Mg(2+) is required as a cofactor.

The protein localises to the cytoplasm. It catalyses the reaction RNA(n+1) + phosphate = RNA(n) + a ribonucleoside 5'-diphosphate. Involved in mRNA degradation. Catalyzes the phosphorolysis of single-stranded polyribonucleotides processively in the 3'- to 5'-direction. This chain is Polyribonucleotide nucleotidyltransferase, found in Campylobacter curvus (strain 525.92).